We begin with the raw amino-acid sequence, 419 residues long: E3 ubiquitin-protein ligase RNF130 (419 aa).

Positions 1 to 27 (MSGAARAGPARLAALALLTCSLWPTRA) are cleaved as a signal peptide. Topologically, residues 28–194 (DNASQEYYTA…MPPKNFSRGS (167 aa)) are extracellular. N-linked (GlcNAc...) asparagine glycosylation is found at N29, N40, N112, N135, N172, and N189. The PA domain occupies 105–176 (IALLQRGNCT…SYLEKNISVQ (72 aa)). Residues 195–217 (LVFVSISFIVLMIISSAWLIFYF) form a helical membrane-spanning segment. Over 218–419 (IQKIRYTNAR…SLNANEVEWF (202 aa)) the chain is Cytoplasmic. Residues 264 to 305 (CAVCIESYKQNDVVRVLPCKHVFHKSCVDPWLSEHCTCPMCK) form an RING-type zinc finger.

In terms of tissue distribution, expression is highest in liver, with lesser amounts in the lung, spleen, brain, heart, kidney and testis.

It localises to the membrane. The protein localises to the cytoplasm. The catalysed reaction is S-ubiquitinyl-[E2 ubiquitin-conjugating enzyme]-L-cysteine + [acceptor protein]-L-lysine = [E2 ubiquitin-conjugating enzyme]-L-cysteine + N(6)-ubiquitinyl-[acceptor protein]-L-lysine.. It participates in protein modification; protein ubiquitination. In terms of biological role, acts as an E3 ubiquitin-protein ligase. May have a role during the programmed cell death of hematopoietic cells. The polypeptide is E3 ubiquitin-protein ligase RNF130 (Mus musculus (Mouse)).